The primary structure comprises 300 residues: 33 kDa chaperonin (300 aa).

2 disulfides stabilise this stretch: C235/C237 and C269/C272.

It belongs to the HSP33 family. In terms of processing, under oxidizing conditions two disulfide bonds are formed involving the reactive cysteines. Under reducing conditions zinc is bound to the reactive cysteines and the protein is inactive.

Its subcellular location is the cytoplasm. Redox regulated molecular chaperone. Protects both thermally unfolding and oxidatively damaged proteins from irreversible aggregation. Plays an important role in the bacterial defense system toward oxidative stress. This chain is 33 kDa chaperonin, found in Pseudomonas savastanoi pv. phaseolicola (strain 1448A / Race 6) (Pseudomonas syringae pv. phaseolicola (strain 1448A / Race 6)).